The chain runs to 379 residues: uncharacterized protein (379 aa).

The chain crosses the membrane as a helical span at residues Val7–Phe27.

It is found in the membrane. This is an uncharacterized protein from Caenorhabditis elegans.